We begin with the raw amino-acid sequence, 280 residues long: Mitochondrial outer membrane protein porin 2 (280 aa).

This sequence belongs to the eukaryotic mitochondrial porin (TC 1.B.8.1) family. As to expression, expressed in roots, stems, leaves, palea, lemma and pollen.

The protein localises to the mitochondrion outer membrane. In terms of biological role, forms a channel through the mitochondrial outer membrane that allows diffusion of small hydrophilic molecules. The channel adopts an open conformation at low or zero membrane potential and a closed conformation at potentials above 30-40 mV. The open state has a weak anion selectivity whereas the closed state is cation-selective. This Oryza sativa subsp. japonica (Rice) protein is Mitochondrial outer membrane protein porin 2 (VDAC2).